A 122-amino-acid polypeptide reads, in one-letter code: Large ribosomal subunit protein bL12 (122 aa).

Belongs to the bacterial ribosomal protein bL12 family. Homodimer. Part of the ribosomal stalk of the 50S ribosomal subunit. Forms a multimeric L10(L12)X complex, where L10 forms an elongated spine to which 2 to 4 L12 dimers bind in a sequential fashion. Binds GTP-bound translation factors.

In terms of biological role, forms part of the ribosomal stalk which helps the ribosome interact with GTP-bound translation factors. Is thus essential for accurate translation. The chain is Large ribosomal subunit protein bL12 from Actinobacillus succinogenes (strain ATCC 55618 / DSM 22257 / CCUG 43843 / 130Z).